The chain runs to 281 residues: Tumor necrosis factor ligand superfamily member 6 (281 aa).

Residues 1 to 80 lie on the Cytoplasmic side of the membrane; that stretch reads MQQPFNYPYP…LKKRGNHSTG (80 aa). Residues 20-71 form a disordered region; that stretch reads SSPWAPPGTVLPCPTSVPRRPGQRRPPPPPPPPPLPPPPPPPPLPPLPLPPL. Residues 43 to 70 show a composition bias toward pro residues; the sequence is RRPPPPPPPPPLPPPPPPPPLPPLPLPP. Residues 81–102 form a helical; Signal-anchor for type II membrane protein membrane-spanning segment; that stretch reads LCLLVMFFMVLVALVGLGLGMF. Over 103 to 281 the chain is Extracellular; it reads QLFHLQKELA…SQTFFGLYKL (179 aa). Over residues 118 to 128 the composition is skewed to polar residues; that stretch reads TSQMHTASSLE. Residues 118–142 form a disordered region; it reads TSQMHTASSLEKQIGHPSPPPEKKE. The 137-residue stretch at 145-281 folds into the THD domain; it reads KVAHLTGKSN…SQTFFGLYKL (137 aa). Asn184 carries an N-linked (GlcNAc...) asparagine glycan. Cys202 and Cys233 are disulfide-bonded. N-linked (GlcNAc...) asparagine glycans are attached at residues Asn250 and Asn260.

The protein belongs to the tumor necrosis factor family. As to quaternary structure, homotrimer. Interacts with ARHGAP9, BAIAP2L1, BTK, CACNB3, CACNB4, CRK, DLG2, DNMBP, DOCK4, EPS8L3, FGR, FYB1, FYN, HCK, ITK, ITSN2, KALRN, LYN, MACC1, MIA, MPP4, MYO15A, NCF1, NCK1, NCK2, NCKIPSD, OSTF1, PIK3R1, PSTPIP1, RIMBP3C, SAMSN1, SH3GL3, SH3PXD2B, SH3PXD2A, SH3RF2, SKAP2, SNX33, SNX9, SORBS3, SPTA1, SRC, SRGAP1, SRGAP2, SRGAP3, TEC, TJP3 and YES1. The soluble form derives from the membrane form by proteolytic processing. The membrane-bound form undergoes two successive intramembrane proteolytic cleavages. The first one is processed by ADAM10 producing an N-terminal fragment, which lacks the receptor-binding extracellular domain. This ADAM10-processed FasL (FasL APL) remnant form is still membrane anchored and further processed by SPPL2A that liberates the FasL intracellular domain (FasL ICD). FasL shedding by ADAM10 is a prerequisite for subsequent intramembrane cleavage by SPPL2A in T-cells. Post-translationally, N-glycosylated. Glycosylation enhances apoptotic activity. In terms of processing, phosphorylated by FGR on tyrosine residues; this is required for ubiquitination and subsequent internalization. Monoubiquitinated.

It is found in the cell membrane. The protein localises to the cytoplasmic vesicle lumen. The protein resides in the lysosome lumen. It localises to the secreted. Its subcellular location is the nucleus. In terms of biological role, cytokine that binds to TNFRSF6/FAS, a receptor that transduces the apoptotic signal into cells. Involved in cytotoxic T-cell-mediated apoptosis, natural killer cell-mediated apoptosis and in T-cell development. Initiates fratricidal/suicidal activation-induced cell death (AICD) in antigen-activated T-cells contributing to the termination of immune responses. TNFRSF6/FAS-mediated apoptosis also has a role in the induction of peripheral tolerance. Binds to TNFRSF6B/DcR3, a decoy receptor that blocks apoptosis. Induces FAS-mediated activation of NF-kappa-B, initiating non-apoptotic signaling pathways. Can induce apoptosis but does not appear to be essential for this process. Functionally, cytoplasmic form induces gene transcription inhibition. The polypeptide is Tumor necrosis factor ligand superfamily member 6 (FASLG) (Homo sapiens (Human)).